Here is a 94-residue protein sequence, read N- to C-terminus: Neutrophil defensin 6 (94 aa).

The signal sequence occupies residues 1 to 19 (MRTIAILAAILLFALLAQA). A propeptide spanning residues 20–61 (KSLQETADEAATQEQPGEDDQDLAVSFEENGLSTLRASGSQA) is cleaved from the precursor. Cystine bridges form between cysteine 65-cysteine 93, cysteine 67-cysteine 82, and cysteine 72-cysteine 92.

It belongs to the alpha-defensin family.

The protein resides in the secreted. Defensins 6 and 7 have bacteriostatic activity against Gram-positive bacteria S.aureus and L.monocytogenes and Gram-negative bacterium E.coli and antifungal activity against C.neoformans. Defensin 7 has microbicidial activity against Gram-positive bacteria S.aureus and L.monocytogenes. This chain is Neutrophil defensin 6, found in Macaca mulatta (Rhesus macaque).